Here is a 72-residue protein sequence, read N- to C-terminus: MAKDDVIQMQGEVLENLPNATFRVKLENGHIVLGHISGKMRMNYIRILPGDKVTVELTPYDLSRARIVFRTK.

Residues 1 to 72 (MAKDDVIQMQ…SRARIVFRTK (72 aa)) form the S1-like domain.

Belongs to the IF-1 family. In terms of assembly, component of the 30S ribosomal translation pre-initiation complex which assembles on the 30S ribosome in the order IF-2 and IF-3, IF-1 and N-formylmethionyl-tRNA(fMet); mRNA recruitment can occur at any time during PIC assembly.

Its subcellular location is the cytoplasm. Its function is as follows. One of the essential components for the initiation of protein synthesis. Stabilizes the binding of IF-2 and IF-3 on the 30S subunit to which N-formylmethionyl-tRNA(fMet) subsequently binds. Helps modulate mRNA selection, yielding the 30S pre-initiation complex (PIC). Upon addition of the 50S ribosomal subunit IF-1, IF-2 and IF-3 are released leaving the mature 70S translation initiation complex. The protein is Translation initiation factor IF-1 2 of Cupriavidus metallidurans (strain ATCC 43123 / DSM 2839 / NBRC 102507 / CH34) (Ralstonia metallidurans).